Reading from the N-terminus, the 627-residue chain is MEGLAGYVYKAASEGKVLTLAALLLNRSESDIRYLLGYVSQQGGQRSTPLIIAARNGHAKVVRLLLEHYRVQTQQTGTVRFDGYVIDGATALWCAAGAGHFEVVKLLVSHGANVNHTTVTNSTPLRAACFDGRLDIVKYLVENNANISIANKYDNTCLMIAAYKGHTDVVRYLLEQRADPNAKAHCGATALHFAAEAGHIDIVKELIKWRAAIVVNGHGMTPLKVAAESCKADVVELLLSHADCDRRSRIEALELLGASFANDRENYDIMKTYHYLYLAMLERFQDGDNILEKEVLPPIHAYGNRTECRNPQELEAIRQDRDALHMEGLIVRERILGADNIDVSHPIIYRGAVYADNMEFEQCIKLWLHALHLRQKGNRNTHKDLLRFAQVFSQMIHLNEAVKAPDIECVLRCSVLEIEQSMNRVKNISDADVHSAMDNYECNLYTFLYLVCISTKTQCSEEDQCRINKQIYNLIHLDPRTREGFSLLHLAVNSNTPVDDFHTNDVCSFPNALVTKLLLDCGAEVNAVDNEGNSALHIIVQYNRPISDFLTLHSIIISLVEAGAHTDMTNKQNKTPLDKSTTGVSEILLKTQMKMSLKCLAARAVRANDINYQDQIPRTLEEFVGFH.

ANK repeat units lie at residues Gln-45–Gln-74, Asp-87–His-116, Thr-120–Ile-149, and Tyr-153–Ala-182. Residues His-185, Cys-186, and His-218 each coordinate Zn(2+). 2 ANK repeats span residues Cys-186–Val-215 and His-218–Ser-248. The TPR repeat unit spans residues Ser-344 to Gly-377. 2 ANK repeats span residues Glu-483–Ala-527 and Glu-531–Met-568.

Belongs to the fem-1 family. Component of a CRL2 E3 ubiquitin-protein ligase complex, also named ECS (Elongin BC-CUL2/5-SOCS-box protein) complex, composed of CUL2, Elongin BC (ELOB and ELOC), RBX1 and substrate-specific adapter FEM1B. Homooligomer. Interacts with PPM1F and PHTF1. Interacts with the death domain of FAS/TNFRSF6 and TNFRSF1A. Interacts with CHEK1. Interacts with NKX3-1. Expressed in pancreatic islets, within both beta cells and non-beta cells (at protein level). Highly expressed in adult testis; expressed in all types of spermatogonia. Also expressed in the prostate of neonatal mice.

It localises to the cytoplasm. The protein localises to the nucleus. It functions in the pathway protein modification; protein ubiquitination. With respect to regulation, activity of the CRL2(FEM1B) complex toward FNIP1 is inhibited by BEX family proteins (BEX1, BEX2, BEX3 and/or BEX4) in absence of reductive stress. Mechanistically, BEX proteins act as pseudosubstrate inhibitors that associate with FEM1B via zinc in absence of reductive stress, thereby preventing association between FEM1B and FNIP1. Substrate-recognition component of a Cul2-RING (CRL2) E3 ubiquitin-protein ligase complex of the DesCEND (destruction via C-end degrons) pathway, which recognizes a C-degron located at the extreme C terminus of target proteins, leading to their ubiquitination and degradation. The C-degron recognized by the DesCEND pathway is usually a motif of less than ten residues and can be present in full-length proteins, truncated proteins or proteolytically cleaved forms. The CRL2(FEM1B) complex specifically recognizes proteins ending with -Gly-Leu-Asp-Arg, such as CDK5R1, leading to their ubiquitination and degradation. Also acts as a regulator of the reductive stress response by mediating ubiquitination of reduced FNIP1: in response to reductive stress, the CRL2(FEM1B) complex specifically recognizes a conserved Cys degron in FNIP1 when this degron is reduced, leading to FNIP1 degradation and subsequent activation of mitochondria to recalibrate reactive oxygen species (ROS). Mechanistically, recognizes and binds reduced FNIP1 through two interface zinc ions, which act as a molecular glue that recruit reduced FNIP1 to FEM1B. Promotes ubiquitination of GLI1, suppressing GLI1 transcriptional activator activity. Promotes ubiquitination and degradation of ANKRD37. Promotes ubiquitination and degradation of SLBP. Involved in apoptosis by acting as a death receptor-associated protein that mediates apoptosis. Also involved in glucose homeostasis in pancreatic islet. May also act as an adapter/mediator in replication stress-induced signaling that leads to the activation of CHEK1. This is Protein fem-1 homolog B from Mus musculus (Mouse).